A 186-amino-acid chain; its full sequence is Transcriptional repressor NrdR (186 aa).

The disordered stretch occupies residues 1–24; sequence MRCPYCGGLDTQVKDSRPSDDASA. A zinc finger spans residues 3–34; sequence CPYCGGLDTQVKDSRPSDDASAIRRRRICPDC. Residues 12–24 are compositionally biased toward basic and acidic residues; the sequence is QVKDSRPSDDASA. The region spanning 49 to 139 is the ATP-cone domain; the sequence is LTVVKRSGRR…VYKNFREARD (91 aa). The tract at residues 146-186 is disordered; it reads RLNGAGRPGGEPEPPDEAAPGPAAAPGEGGEAPARRARSRA.

Belongs to the NrdR family. The cofactor is Zn(2+).

Negatively regulates transcription of bacterial ribonucleotide reductase nrd genes and operons by binding to NrdR-boxes. The sequence is that of Transcriptional repressor NrdR from Methylobacterium sp. (strain 4-46).